A 181-amino-acid polypeptide reads, in one-letter code: uncharacterized protein (181 aa).

The signal sequence occupies residues M1 to A23.

This is an uncharacterized protein from Bacillus subtilis (strain 168).